The primary structure comprises 420 residues: 4-hydroxy-3-methylbut-2-en-1-yl diphosphate synthase (flavodoxin) (420 aa).

[4Fe-4S] cluster contacts are provided by cysteine 307, cysteine 310, cysteine 353, and glutamate 360.

Belongs to the IspG family. [4Fe-4S] cluster is required as a cofactor.

It catalyses the reaction (2E)-4-hydroxy-3-methylbut-2-enyl diphosphate + oxidized [flavodoxin] + H2O + 2 H(+) = 2-C-methyl-D-erythritol 2,4-cyclic diphosphate + reduced [flavodoxin]. It functions in the pathway isoprenoid biosynthesis; isopentenyl diphosphate biosynthesis via DXP pathway; isopentenyl diphosphate from 1-deoxy-D-xylulose 5-phosphate: step 5/6. Converts 2C-methyl-D-erythritol 2,4-cyclodiphosphate (ME-2,4cPP) into 1-hydroxy-2-methyl-2-(E)-butenyl 4-diphosphate. The polypeptide is 4-hydroxy-3-methylbut-2-en-1-yl diphosphate synthase (flavodoxin) (Brucella suis (strain ATCC 23445 / NCTC 10510)).